A 234-amino-acid polypeptide reads, in one-letter code: Putative N-acetylmannosamine-6-phosphate 2-epimerase (234 aa).

It belongs to the NanE family.

It carries out the reaction an N-acyl-D-glucosamine 6-phosphate = an N-acyl-D-mannosamine 6-phosphate. The protein operates within amino-sugar metabolism; N-acetylneuraminate degradation; D-fructose 6-phosphate from N-acetylneuraminate: step 3/5. Its function is as follows. Converts N-acetylmannosamine-6-phosphate (ManNAc-6-P) to N-acetylglucosamine-6-phosphate (GlcNAc-6-P). The chain is Putative N-acetylmannosamine-6-phosphate 2-epimerase from Klebsiella pneumoniae subsp. pneumoniae (strain ATCC 700721 / MGH 78578).